A 200-amino-acid chain; its full sequence is Putative hydrolase MhqD (200 aa).

Residues S100, D150, and H181 each act as charge relay system in the active site.

The protein belongs to the AB hydrolase superfamily. AB hydrolase 2 family.

Its subcellular location is the cytoplasm. Putative hydrolase that may contribute to the degradation of aromatic compounds. This is Putative hydrolase MhqD (mhqD) from Bacillus subtilis (strain 168).